The following is an 862-amino-acid chain: Linoleate 9S-lipoxygenase 1 (862 aa).

One can recognise a PLAT domain in the interval 34–161 (NDFGATIIDG…NYRYSRVFFA (128 aa)). A Lipoxygenase domain is found at 164-862 (TYLPSQMPAA…AKGIPNSISI (699 aa)). Residues 212 to 241 (GRPILGGNSDHPYPRRGRTERKPNASDPSL) form a disordered region. His517, His522, His708, Asn712, and Ile862 together coordinate Fe cation.

It belongs to the lipoxygenase family. In terms of assembly, monomer. Fe cation serves as cofactor.

The catalysed reaction is (9Z,12Z)-octadecadienoate + O2 = (9S)-hydroperoxy-(10E,12Z)-octadecadienoate. The protein operates within lipid metabolism; oxylipin biosynthesis. Functionally, plant lipoxygenase may be involved in a number of diverse aspects of plant physiology including growth and development, pest resistance, and senescence or responses to wounding. It catalyzes the hydroperoxidation of lipids containing a cis,cis-1,4-pentadiene structure. The polypeptide is Linoleate 9S-lipoxygenase 1 (LOX1.1) (Hordeum vulgare (Barley)).